Here is a 268-residue protein sequence, read N- to C-terminus: Glucosamine-6-phosphate deaminase (268 aa).

The Proton acceptor; for enolization step role is filled by Asp72. Residue Asp141 is the For ring-opening step of the active site. His143 serves as the catalytic Proton acceptor; for ring-opening step. Glu148 functions as the For ring-opening step in the catalytic mechanism.

This sequence belongs to the glucosamine/galactosamine-6-phosphate isomerase family. NagB subfamily.

It catalyses the reaction alpha-D-glucosamine 6-phosphate + H2O = beta-D-fructose 6-phosphate + NH4(+). It functions in the pathway amino-sugar metabolism; N-acetylneuraminate degradation; D-fructose 6-phosphate from N-acetylneuraminate: step 5/5. With respect to regulation, allosterically activated by N-acetylglucosamine 6-phosphate (GlcNAc6P). Catalyzes the reversible isomerization-deamination of glucosamine 6-phosphate (GlcN6P) to form fructose 6-phosphate (Fru6P) and ammonium ion. The sequence is that of Glucosamine-6-phosphate deaminase from Borreliella afzelii (strain PKo) (Borrelia afzelii).